We begin with the raw amino-acid sequence, 720 residues long: Exocyst complex component 7 (720 aa).

Coiled coils occupy residues 5–34 (EDAS…SLEK) and 63–83 (VHKQ…TLSN). Residue S133 is modified to Phosphoserine. A disordered region spans residues 249-268 (SPAVQTKRKETPTKKAPKRP).

Belongs to the EXO70 family.

It is found in the cytoplasm. Its subcellular location is the cytosol. The protein resides in the cell membrane. The protein localises to the midbody. It localises to the midbody ring. Its function is as follows. Component of the exocyst complex involved in the docking of exocytic vesicles with fusion sites on the plasma membrane. It is required for neuron survival and plays an essential role in telencephalon development. The protein is Exocyst complex component 7 (exoc7) of Danio rerio (Zebrafish).